The sequence spans 157 residues: Cyclic pyranopterin monophosphate synthase (157 aa).

Residues 74–76 (MCH) and 112–113 (ME) each bind substrate. The active site involves aspartate 127.

The protein belongs to the MoaC family. Homohexamer; trimer of dimers.

The enzyme catalyses (8S)-3',8-cyclo-7,8-dihydroguanosine 5'-triphosphate = cyclic pyranopterin phosphate + diphosphate. It participates in cofactor biosynthesis; molybdopterin biosynthesis. In terms of biological role, catalyzes the conversion of (8S)-3',8-cyclo-7,8-dihydroguanosine 5'-triphosphate to cyclic pyranopterin monophosphate (cPMP). The sequence is that of Cyclic pyranopterin monophosphate synthase from Campylobacter jejuni (strain RM1221).